The primary structure comprises 187 residues: Elongation factor P (187 aa).

The protein belongs to the elongation factor P family.

It localises to the cytoplasm. It functions in the pathway protein biosynthesis; polypeptide chain elongation. Involved in peptide bond synthesis. Stimulates efficient translation and peptide-bond synthesis on native or reconstituted 70S ribosomes in vitro. Probably functions indirectly by altering the affinity of the ribosome for aminoacyl-tRNA, thus increasing their reactivity as acceptors for peptidyl transferase. The chain is Elongation factor P from Mycobacterium avium (strain 104).